The primary structure comprises 577 residues: Arginine--tRNA ligase (577 aa).

Positions 122–132 match the 'HIGH' region motif; the sequence is PNVAKEMHVGH.

Belongs to the class-I aminoacyl-tRNA synthetase family. As to quaternary structure, monomer.

Its subcellular location is the cytoplasm. The enzyme catalyses tRNA(Arg) + L-arginine + ATP = L-arginyl-tRNA(Arg) + AMP + diphosphate. This Escherichia coli (strain ATCC 8739 / DSM 1576 / NBRC 3972 / NCIMB 8545 / WDCM 00012 / Crooks) protein is Arginine--tRNA ligase.